The following is a 261-amino-acid chain: uncharacterized protein (261 aa).

The tract at residues 1–22 is disordered; the sequence is MGVADNEYISVPTGEPVQQQPQ. A run of 3 helical transmembrane segments spans residues 92–112, 122–142, and 147–167; these read IIILFFSQQFLLFSIAPILGL, IVVMHFLTAAFYYIFSVIFLF, and INTILLSILFSIIFTLSLMNY.

Its subcellular location is the membrane. This is an uncharacterized protein from Dictyostelium discoideum (Social amoeba).